We begin with the raw amino-acid sequence, 503 residues long: Aromatase 2 (503 aa).

C437 provides a ligand contact to heme.

It belongs to the cytochrome P450 family. Heme serves as cofactor.

It is found in the membrane. The enzyme catalyses testosterone + 3 reduced [NADPH--hemoprotein reductase] + 3 O2 = 17beta-estradiol + formate + 3 oxidized [NADPH--hemoprotein reductase] + 4 H2O + 4 H(+). The catalysed reaction is androst-4-ene-3,17-dione + 3 reduced [NADPH--hemoprotein reductase] + 3 O2 = estrone + formate + 3 oxidized [NADPH--hemoprotein reductase] + 4 H2O + 4 H(+). Functionally, catalyzes the formation of aromatic C18 estrogens from C19 androgens. This Sus scrofa (Pig) protein is Aromatase 2 (CYP19A2).